The primary structure comprises 660 residues: Cysteine--tRNA ligase, cytoplasmic (660 aa).

Positions 1–10 (MSENSSPKLE) are enriched in polar residues. Residues 1 to 20 (MSENSSPKLESTSAAAASTK) form a disordered region. Residue Cys-65 coordinates Zn(2+). Positions 67–77 (PTVYDASHMGH) match the 'HIGH' region motif. 3 residues coordinate Zn(2+): Cys-256, His-281, and Glu-285. A 'KMSKS' region motif is present at residues 314 to 318 (KMSKS). ATP is bound at residue Lys-317. Disordered regions lie at residues 563-584 (IEKK…KFEK) and 627-660 (QKEY…QSPQ). Positions 627-639 (QKEYDNQTKEHNN) are enriched in basic and acidic residues. The span at 643–660 (SLSTSTSSPTLTSTQSPQ) shows a compositional bias: low complexity.

Belongs to the class-I aminoacyl-tRNA synthetase family. Requires Zn(2+) as cofactor.

It localises to the cytoplasm. The enzyme catalyses tRNA(Cys) + L-cysteine + ATP = L-cysteinyl-tRNA(Cys) + AMP + diphosphate. The protein is Cysteine--tRNA ligase, cytoplasmic (cysS) of Dictyostelium discoideum (Social amoeba).